The chain runs to 579 residues: Probable receptor-like serine/threonine-protein kinase At5g57670 (579 aa).

Thr-256 is modified (phosphothreonine). A Protein kinase domain is found at 267–542; sequence FHQGNIVGIG…LLTNGNEAEI (276 aa). ATP-binding positions include 273-281 and Lys-295; that span reads VGIGGYSEV. Asp-392 (proton acceptor) is an active-site residue. Phosphoserine is present on Ser-396. Thr-432 carries the phosphothreonine modification.

The protein belongs to the protein kinase superfamily. Ser/Thr protein kinase family.

The catalysed reaction is L-seryl-[protein] + ATP = O-phospho-L-seryl-[protein] + ADP + H(+). It carries out the reaction L-threonyl-[protein] + ATP = O-phospho-L-threonyl-[protein] + ADP + H(+). This is Probable receptor-like serine/threonine-protein kinase At5g57670 from Arabidopsis thaliana (Mouse-ear cress).